We begin with the raw amino-acid sequence, 207 residues long: Holliday junction branch migration complex subunit RuvA (207 aa).

Residues 1–65 are domain I; sequence MYDYIRGTLT…ETEHLLYGFH (65 aa). The interval 66–144 is domain II; sequence SREERECFRI…DLLPLDSRVE (79 aa). Residues 145–150 are flexible linker; the sequence is TSQTHT. Residues 150–207 form a domain III region; sequence TTSSCLEEGIQALAALGYSKIAAERMIAEAIKDLPEGSSLTDILPIALKKNFSGVNKD.

The protein belongs to the RuvA family. In terms of assembly, homotetramer. Forms an RuvA(8)-RuvB(12)-Holliday junction (HJ) complex. HJ DNA is sandwiched between 2 RuvA tetramers; dsDNA enters through RuvA and exits via RuvB. An RuvB hexamer assembles on each DNA strand where it exits the tetramer. Each RuvB hexamer is contacted by two RuvA subunits (via domain III) on 2 adjacent RuvB subunits; this complex drives branch migration. In the full resolvosome a probable DNA-RuvA(4)-RuvB(12)-RuvC(2) complex forms which resolves the HJ.

Its subcellular location is the cytoplasm. In terms of biological role, the RuvA-RuvB-RuvC complex processes Holliday junction (HJ) DNA during genetic recombination and DNA repair, while the RuvA-RuvB complex plays an important role in the rescue of blocked DNA replication forks via replication fork reversal (RFR). RuvA specifically binds to HJ cruciform DNA, conferring on it an open structure. The RuvB hexamer acts as an ATP-dependent pump, pulling dsDNA into and through the RuvAB complex. HJ branch migration allows RuvC to scan DNA until it finds its consensus sequence, where it cleaves and resolves the cruciform DNA. This chain is Holliday junction branch migration complex subunit RuvA, found in Chlamydia pneumoniae (Chlamydophila pneumoniae).